A 934-amino-acid polypeptide reads, in one-letter code: 2-oxoglutarate dehydrogenase E1 component (934 aa).

The protein belongs to the alpha-ketoglutarate dehydrogenase family. As to quaternary structure, homodimer. Part of the 2-oxoglutarate dehydrogenase (OGDH) complex composed of E1 (2-oxoglutarate dehydrogenase), E2 (dihydrolipoamide succinyltransferase) and E3 (dihydrolipoamide dehydrogenase); the complex contains multiple copies of the three enzymatic components (E1, E2 and E3). It depends on thiamine diphosphate as a cofactor.

It carries out the reaction N(6)-[(R)-lipoyl]-L-lysyl-[protein] + 2-oxoglutarate + H(+) = N(6)-[(R)-S(8)-succinyldihydrolipoyl]-L-lysyl-[protein] + CO2. Its function is as follows. E1 component of the 2-oxoglutarate dehydrogenase (OGDH) complex which catalyzes the decarboxylation of 2-oxoglutarate, the first step in the conversion of 2-oxoglutarate to succinyl-CoA and CO(2). The sequence is that of 2-oxoglutarate dehydrogenase E1 component from Staphylococcus epidermidis (strain ATCC 35984 / DSM 28319 / BCRC 17069 / CCUG 31568 / BM 3577 / RP62A).